The primary structure comprises 562 residues: Potassium-transporting ATPase potassium-binding subunit (562 aa).

The next 12 helical transmembrane spans lie at Phe-6–Phe-26, Tyr-62–Met-82, Gly-132–Ile-152, Leu-175–Leu-195, Phe-253–Val-273, Leu-283–Leu-303, Phe-327–Val-347, Ala-356–Val-376, Gly-379–Gly-399, Met-416–Leu-436, Leu-483–Ile-503, and Gly-524–Ile-544.

The protein belongs to the KdpA family. As to quaternary structure, the system is composed of three essential subunits: KdpA, KdpB and KdpC.

The protein resides in the cell inner membrane. Its function is as follows. Part of the high-affinity ATP-driven potassium transport (or Kdp) system, which catalyzes the hydrolysis of ATP coupled with the electrogenic transport of potassium into the cytoplasm. This subunit binds the periplasmic potassium ions and delivers the ions to the membrane domain of KdpB through an intramembrane tunnel. This Yersinia pestis bv. Antiqua (strain Antiqua) protein is Potassium-transporting ATPase potassium-binding subunit.